We begin with the raw amino-acid sequence, 247 residues long: Protein-L-isoaspartate O-methyltransferase 2 (247 aa).

The active site involves Ser97.

It belongs to the methyltransferase superfamily. L-isoaspartyl/D-aspartyl protein methyltransferase family.

It localises to the cytoplasm. It carries out the reaction [protein]-L-isoaspartate + S-adenosyl-L-methionine = [protein]-L-isoaspartate alpha-methyl ester + S-adenosyl-L-homocysteine. Catalyzes the methyl esterification of L-isoaspartyl residues in peptides and proteins that result from spontaneous decomposition of normal L-aspartyl and L-asparaginyl residues. It plays a role in the repair and/or degradation of damaged proteins. The sequence is that of Protein-L-isoaspartate O-methyltransferase 2 from Syntrophobacter fumaroxidans (strain DSM 10017 / MPOB).